Here is a 152-residue protein sequence, read N- to C-terminus: UPF0225 protein Ent638_2310 (152 aa).

The protein belongs to the UPF0225 family.

In Enterobacter sp. (strain 638), this protein is UPF0225 protein Ent638_2310.